A 618-amino-acid chain; its full sequence is DNA mismatch repair protein MutL (618 aa).

It belongs to the DNA mismatch repair MutL/HexB family.

In terms of biological role, this protein is involved in the repair of mismatches in DNA. It is required for dam-dependent methyl-directed DNA mismatch repair. May act as a 'molecular matchmaker', a protein that promotes the formation of a stable complex between two or more DNA-binding proteins in an ATP-dependent manner without itself being part of a final effector complex. This Bradyrhizobium sp. (strain BTAi1 / ATCC BAA-1182) protein is DNA mismatch repair protein MutL.